The sequence spans 335 residues: Dihydroorotate dehydrogenase (quinone) (335 aa).

FMN contacts are provided by residues 59 to 63 (AGLDK) and T83. Substrate is bound at residue K63. 108-112 (NRMGF) is a binding site for substrate. FMN is bound by residues N136 and N169. N169 provides a ligand contact to substrate. Catalysis depends on S172, which acts as the Nucleophile. Residue N174 participates in substrate binding. 2 residues coordinate FMN: K214 and T242. 243-244 (NT) provides a ligand contact to substrate. FMN is bound by residues G265, G294, and 315 to 316 (YS).

This sequence belongs to the dihydroorotate dehydrogenase family. Type 2 subfamily. As to quaternary structure, monomer. The cofactor is FMN.

Its subcellular location is the cell membrane. The enzyme catalyses (S)-dihydroorotate + a quinone = orotate + a quinol. It functions in the pathway pyrimidine metabolism; UMP biosynthesis via de novo pathway; orotate from (S)-dihydroorotate (quinone route): step 1/1. Catalyzes the conversion of dihydroorotate to orotate with quinone as electron acceptor. The polypeptide is Dihydroorotate dehydrogenase (quinone) (Neisseria gonorrhoeae (strain ATCC 700825 / FA 1090)).